The primary structure comprises 346 residues: Phosphoribosylformylglycinamidine cyclo-ligase (346 aa).

The protein belongs to the AIR synthase family.

The protein resides in the cytoplasm. It carries out the reaction 2-formamido-N(1)-(5-O-phospho-beta-D-ribosyl)acetamidine + ATP = 5-amino-1-(5-phospho-beta-D-ribosyl)imidazole + ADP + phosphate + H(+). Its pathway is purine metabolism; IMP biosynthesis via de novo pathway; 5-amino-1-(5-phospho-D-ribosyl)imidazole from N(2)-formyl-N(1)-(5-phospho-D-ribosyl)glycinamide: step 2/2. The chain is Phosphoribosylformylglycinamidine cyclo-ligase from Polaromonas sp. (strain JS666 / ATCC BAA-500).